The sequence spans 397 residues: Cephalotocin receptor 1 (397 aa).

Residues 1–48 (MRYITTHPNEISTQIWNNFSSTEIWSNFSAAKNETQPIRRNQDLANAE) are Extracellular-facing. 3 N-linked (GlcNAc...) asparagine glycosylation sites follow: Asn-18, Asn-27, and Asn-33. A helical membrane pass occupies residues 49–69 (VITLAVVIIITVIGNSIVLIT). Residues 70 to 91 (LFQRRKKLTRMHLFILHLSVTD) are Cytoplasmic-facing. The helical transmembrane segment at 92-112 (LFVAFFNNLPQMIWDITFLFL) threads the bilayer. Residues 113 to 120 (GTDLLCRL) lie on the Extracellular side of the membrane. Cysteines 118 and 194 form a disulfide. The helical transmembrane segment at 121-141 (VTYLQSVAMYASSYVLVATAI) threads the bilayer. Residues 142-162 (DRYFAICHPLSSHKWTTARVH) lie on the Cytoplasmic side of the membrane. Residues 163–183 (VMVFIAWMLSFLFSTPQLFIW) traverse the membrane as a helical segment. The Extracellular segment spans residues 184-205 (SMQFSNIGLTCQATFDPEWTLK). A helical transmembrane segment spans residues 206 to 226 (FYITWLTVAIWILPTIALTLF). Residues 227-293 (YGMMCFAVWK…RGISRAKVRS (67 aa)) lie on the Cytoplasmic side of the membrane. A helical transmembrane segment spans residues 294 to 314 (VALTLSVVACCFICWSPFFVC). Over 315 to 331 (QMWAAWDENAPYSGAIY) the chain is Extracellular. Residues 332–352 (TILLLLSSLNSCTNPWIYMIF) form a helical membrane-spanning segment. At 353–397 (SVFQHRAKTSRFVNDEETTSVTVLSSRNDIRLMSMKKKLEQTARN) the chain is on the cytoplasmic side.

This sequence belongs to the G-protein coupled receptor 1 family. Vasopressin/oxytocin receptor subfamily. In terms of tissue distribution, present in brain, buccal ganglion, gastric ganglion, olfactory lube, peduncle lobe, optical lobe, pancreas, the oviduct and the ovary.

The protein localises to the cell membrane. Its function is as follows. Acts as a receptor for cephalotocin. In Octopus vulgaris (Common octopus), this protein is Cephalotocin receptor 1.